Here is a 207-residue protein sequence, read N- to C-terminus: Cytochrome bo(3) ubiquinol oxidase subunit 3 (207 aa).

At 1-26 (MSSQVMHGAAHGHDHGHDDHHHDSGQ) the chain is on the cytoplasmic side. Residues 27–47 (MTVLGFWLYLMTDCILFASLF) form a helical membrane-spanning segment. At 48–70 (ATYAVLSGSFAGGPSGHDIFQLD) the chain is on the periplasmic side. A helical transmembrane segment spans residues 71–91 (FVAVETLFLLLSSITFGFAML). Residues 92–99 (KMFDGKKA) are Cytoplasmic-facing. A helical transmembrane segment spans residues 100 to 120 (GVLGWLAVTFLFGAGFIAMEI). Residues 121–141 (YEFHHLIAEGFGPQRSGFLSG) lie on the Periplasmic side of the membrane. Residues 142–162 (FFALVGTHGLHVTAGLIWMAI) traverse the membrane as a helical segment. The Cytoplasmic portion of the chain corresponds to 163-185 (MMYQINKHGITPTAKTRMSCLSL). A helical membrane pass occupies residues 186-206 (FWHFLDVVWICVFTVVYLLGV). Position 207 (Leu207) is a topological domain, periplasmic.

The protein belongs to the cytochrome c oxidase subunit 3 family. As to quaternary structure, heterooctamer of two A chains, two B chains, two C chains and two D chains.

The protein localises to the cell inner membrane. In terms of biological role, cytochrome bo(3) ubiquinol terminal oxidase is the component of the aerobic respiratory chain of E.coli that predominates when cells are grown at high aeration. Has proton pump activity across the membrane in addition to electron transfer, pumping 2 protons/electron. This Pseudomonas putida (Arthrobacter siderocapsulatus) protein is Cytochrome bo(3) ubiquinol oxidase subunit 3 (cyoC).